A 562-amino-acid polypeptide reads, in one-letter code: Dihydroxy-acid dehydratase (562 aa).

A Mg(2+)-binding site is contributed by D80. C121 provides a ligand contact to [2Fe-2S] cluster. Mg(2+) is bound by residues D122 and K123. Position 123 is an N6-carboxylysine (K123). C194 contributes to the [2Fe-2S] cluster binding site. Position 446 (E446) interacts with Mg(2+). Catalysis depends on S472, which acts as the Proton acceptor.

The protein belongs to the IlvD/Edd family. In terms of assembly, homodimer. Requires [2Fe-2S] cluster as cofactor. Mg(2+) is required as a cofactor.

It catalyses the reaction (2R)-2,3-dihydroxy-3-methylbutanoate = 3-methyl-2-oxobutanoate + H2O. The enzyme catalyses (2R,3R)-2,3-dihydroxy-3-methylpentanoate = (S)-3-methyl-2-oxopentanoate + H2O. The protein operates within amino-acid biosynthesis; L-isoleucine biosynthesis; L-isoleucine from 2-oxobutanoate: step 3/4. It participates in amino-acid biosynthesis; L-valine biosynthesis; L-valine from pyruvate: step 3/4. Its function is as follows. Functions in the biosynthesis of branched-chain amino acids. Catalyzes the dehydration of (2R,3R)-2,3-dihydroxy-3-methylpentanoate (2,3-dihydroxy-3-methylvalerate) into 2-oxo-3-methylpentanoate (2-oxo-3-methylvalerate) and of (2R)-2,3-dihydroxy-3-methylbutanoate (2,3-dihydroxyisovalerate) into 2-oxo-3-methylbutanoate (2-oxoisovalerate), the penultimate precursor to L-isoleucine and L-valine, respectively. The chain is Dihydroxy-acid dehydratase from Staphylococcus haemolyticus (strain JCSC1435).